The following is a 200-amino-acid chain: Molybdenum cofactor guanylyltransferase (200 aa).

GTP-binding positions include 15-17 (LSG), Lys-28, Asp-74, and Asp-104. Asp-104 serves as a coordination point for Mg(2+).

This sequence belongs to the MobA family. In terms of assembly, monomer. Requires Mg(2+) as cofactor.

The protein resides in the cytoplasm. It catalyses the reaction Mo-molybdopterin + GTP + H(+) = Mo-molybdopterin guanine dinucleotide + diphosphate. Its function is as follows. Transfers a GMP moiety from GTP to Mo-molybdopterin (Mo-MPT) cofactor (Moco or molybdenum cofactor) to form Mo-molybdopterin guanine dinucleotide (Mo-MGD) cofactor. The polypeptide is Molybdenum cofactor guanylyltransferase (Pseudomonas fluorescens (strain SBW25)).